Here is a 296-residue protein sequence, read N- to C-terminus: uncharacterized protein (296 aa).

CBS domains are found at residues 176–232 (GIKE…DKKV) and 236–292 (MRRD…KFPE).

This is an uncharacterized protein from Methanocaldococcus jannaschii (strain ATCC 43067 / DSM 2661 / JAL-1 / JCM 10045 / NBRC 100440) (Methanococcus jannaschii).